We begin with the raw amino-acid sequence, 456 residues long: MKKNIGTIISISGFVLKIEFNESELPEISHALEYKTHQGTYLAEVVQHTGINTVSAIAIGEVSGLARGAEVINLGHPIEVPVGETVQGRMLNVYGKAIDGLPEPEAEVKWPIFREQPLLRELDTNKEILYTGIKVIDLICPILKGGKTGLFGGAGVGKSVLMQELINNISMMGGNSVFTGVGERVREGIGLYNELESSGVLPQTTVVLGQMNESPGVRMRVALTGLTIAEYLRDEEKKDVLLFIDNVFRFIQAGSEVSSLQGKIPITGGYQSTLSKEVGDFQDRIASTKNGSITSIQCVFLPADDIDDPSAVATFSHLDSTIVLERSIAALGIFPAVNPLQSFSRALNPTFVGERHYQLAVQVKFILQRYMELQEIINVLGMAELSDEDKKLVHRARKIRNFLSQPFYVSEKFTGTEGIFVEIEDLLSSVERILNGEYDERSEREFLFIGSYKDLK.

Position 152–159 (Gly-152–Ser-159) interacts with ATP.

Belongs to the ATPase alpha/beta chains family. F-type ATPases have 2 components, CF(1) - the catalytic core - and CF(0) - the membrane proton channel. CF(1) has five subunits: alpha(3), beta(3), gamma(1), delta(1), epsilon(1). CF(0) has three main subunits: a(1), b(2) and c(9-12). The alpha and beta chains form an alternating ring which encloses part of the gamma chain. CF(1) is attached to CF(0) by a central stalk formed by the gamma and epsilon chains, while a peripheral stalk is formed by the delta and b chains.

It localises to the cell membrane. The catalysed reaction is ATP + H2O + 4 H(+)(in) = ADP + phosphate + 5 H(+)(out). Produces ATP from ADP in the presence of a proton gradient across the membrane. The catalytic sites are hosted primarily by the beta subunits. The protein is ATP synthase subunit beta 1 of Listeria innocua serovar 6a (strain ATCC BAA-680 / CLIP 11262).